The sequence spans 53 residues: Light-harvesting protein B-808/866 beta chain (53 aa).

The residue at position 1 (Met1) is an N-formylmethionine. Topologically, residues 1 to 25 (MRDDDDLVPPKWRPLFNNQDWLLHD) are cytoplasmic. Positions 24 and 42 each coordinate a bacteriochlorophyll. The helical transmembrane segment at 26–48 (IVVKSFYGFGVIAAIAHLLVYLW) threads the bilayer. Over 49-53 (KPWLP) the chain is Periplasmic.

Belongs to the antenna complex beta subunit family. The core complex is formed by different alpha and beta chains, binding bacteriochlorophyll molecules, and arranged most probably in tetrameric structures disposed around the reaction center. The non-pigmented gamma chains may constitute additional components.

It is found in the cell membrane. Functionally, antenna complexes are light-harvesting systems, which transfer the excitation energy to the reaction centers. The sequence is that of Light-harvesting protein B-808/866 beta chain (puf2B) from Chloroflexus aurantiacus (strain ATCC 29366 / DSM 635 / J-10-fl).